The chain runs to 425 residues: Serine/threonine-protein kinase VRK1 (425 aa).

A Protein kinase domain is found at 38-329 (WKLGSAVGQG…KLRGILQQGL (292 aa)). Residues 44–52 (VGQGGFGLL) and lysine 72 each bind ATP. Aspartate 178 acts as the Proton acceptor in catalysis. A disordered region spans residues 343-425 (GVATNSTSLP…KSRGRPKKNS (83 aa)). Positions 415–425 (KKSRGRPKKNS) are enriched in basic residues.

This sequence belongs to the protein kinase superfamily. CK1 Ser/Thr protein kinase family. VRK subfamily.

Its subcellular location is the nucleus. The protein localises to the cytoplasm. The protein resides in the cajal body. It catalyses the reaction L-seryl-[protein] + ATP = O-phospho-L-seryl-[protein] + ADP + H(+). The catalysed reaction is L-threonyl-[protein] + ATP = O-phospho-L-threonyl-[protein] + ADP + H(+). Functionally, serine/threonine kinase involved in the regulation of key cellular processes including the cell cycle, nuclear condensation, transcription regulation, and DNA damage response. Controls chromatin organization and remodeling by mediating phosphorylation of histone H3 on 'Thr-4' and histone H2AX (H2aXT4ph). It also phosphorylates KAT5 in response to DNA damage, promoting KAT5 association with chromatin and histone acetyltransferase activity. Is involved in the regulation of cell cycle progression of neural progenitors, and is required for proper cortical neuronal migration. Is involved in neurite elongation and branching in motor neurons, and has an essential role in Cajal bodies assembly, acting through COIL phosphorylation and the control of coilin degradation. Involved in Golgi disassembly during the cell cycle: following phosphorylation by PLK3 during mitosis, it is required to induce Golgi fragmentation. Phosphorylates BANF1: disrupts its ability to bind DNA, reduces its binding to LEM domain-containing proteins and causes its relocalization from the nucleus to the cytoplasm. Phosphorylates TP53BP1 and p53/TP53 on 'Thr-18', preventing the interaction between p53/TP53 and MDM2. Phosphorylates ATF2 which activates its transcriptional activity. Phosphorylates JUN. The sequence is that of Serine/threonine-protein kinase VRK1 (vrk1) from Danio rerio (Zebrafish).